A 337-amino-acid chain; its full sequence is Quinolinate synthase (337 aa).

The iminosuccinate site is built by H38 and S59. C104 is a [4Fe-4S] cluster binding site. Iminosuccinate contacts are provided by residues 130–132 (YAN) and S147. [4Fe-4S] cluster is bound at residue C191. Residues 217–219 (HPE) and T234 each bind iminosuccinate. C288 provides a ligand contact to [4Fe-4S] cluster.

The protein belongs to the quinolinate synthase family. Type 1 subfamily. [4Fe-4S] cluster serves as cofactor.

Its subcellular location is the cytoplasm. The enzyme catalyses iminosuccinate + dihydroxyacetone phosphate = quinolinate + phosphate + 2 H2O + H(+). Its pathway is cofactor biosynthesis; NAD(+) biosynthesis; quinolinate from iminoaspartate: step 1/1. In terms of biological role, catalyzes the condensation of iminoaspartate with dihydroxyacetone phosphate to form quinolinate. This is Quinolinate synthase from Wigglesworthia glossinidia brevipalpis.